Consider the following 145-residue polypeptide: Secreted LysM effector Vd2LysM (145 aa).

The first 18 residues, 1–18 (MRPDVFVLFTAFLGPAAA), serve as a signal peptide directing secretion. LysM domains lie at 31 to 75 (GWYI…KIKV) and 96 to 140 (GWYH…DIVV).

This sequence belongs to the secreted LysM effector family. As to quaternary structure, forms homodimers in a chitin-independent manner through interactions at the N-termini of EPL2 monomers. Homodimers are further polymerized in a chitin-dependent manner.

In terms of biological role, secreted effector that enables the plant pathogenic fungus to manipulate host defenses for successful infection. Binds chitin, suppresses chitin-induced immune responses and protects hyphae against degradation by plant hydrolytic enzymes. Chitin-induced polymerization of homodimers forms a contiguous ELP2 highly oligomeric super-complexe that may precipitate at infection sites to eliminate chitin oligomers, and thus suppress the activation of chitin-induced plant immunity. In Verticillium dahliae (strain VdLs.17 / ATCC MYA-4575 / FGSC 10137) (Verticillium wilt), this protein is Secreted LysM effector Vd2LysM.